The primary structure comprises 455 residues: Nuclear receptor subfamily 6 group A member 1-B (455 aa).

A DNA-binding region (nuclear receptor) is located at residues 38–113; it reads ERWCLICGDR…MGMNRKAIRE (76 aa). 2 consecutive NR C4-type zinc fingers follow at residues 41–61 and 77–96; these read CLICGDRASGLHYGIISCEGC and CNRDKNCQMSRKQRNRCQYC. Residues 145–173 are disordered; that stretch reads EGSDLSDSWSHGYSNHSSPGNSLSEGGQS. The span at 149–165 shows a compositional bias: polar residues; it reads LSDSWSHGYSNHSSPGN. In terms of domain architecture, NR LBD spans 215-446; it reads QTHTLTGQIL…YSCTTNQNPW (232 aa).

This sequence belongs to the nuclear hormone receptor family. NR6 subfamily. Homodimer.

It is found in the nucleus. Its function is as follows. Probable orphan nuclear receptor. Binds to a response element containing repeats of the motif 5'-AGGTCA-3'. The sequence is that of Nuclear receptor subfamily 6 group A member 1-B from Danio rerio (Zebrafish).